Reading from the N-terminus, the 124-residue chain is Large ribosomal subunit protein bL12 (124 aa).

This sequence belongs to the bacterial ribosomal protein bL12 family. Homodimer. Part of the ribosomal stalk of the 50S ribosomal subunit. Forms a multimeric L10(L12)X complex, where L10 forms an elongated spine to which 2 to 4 L12 dimers bind in a sequential fashion. Binds GTP-bound translation factors.

In terms of biological role, forms part of the ribosomal stalk which helps the ribosome interact with GTP-bound translation factors. Is thus essential for accurate translation. In Burkholderia cenocepacia (strain ATCC BAA-245 / DSM 16553 / LMG 16656 / NCTC 13227 / J2315 / CF5610) (Burkholderia cepacia (strain J2315)), this protein is Large ribosomal subunit protein bL12.